Consider the following 376-residue polypeptide: Succinyl-diaminopimelate desuccinylase (376 aa).

His66 provides a ligand contact to Zn(2+). Asp68 is an active-site residue. Asp99 lines the Zn(2+) pocket. Catalysis depends on Glu133, which acts as the Proton acceptor. 3 residues coordinate Zn(2+): Glu134, Glu162, and His348.

The protein belongs to the peptidase M20A family. DapE subfamily. As to quaternary structure, homodimer. Requires Zn(2+) as cofactor. The cofactor is Co(2+).

It carries out the reaction N-succinyl-(2S,6S)-2,6-diaminopimelate + H2O = (2S,6S)-2,6-diaminopimelate + succinate. It participates in amino-acid biosynthesis; L-lysine biosynthesis via DAP pathway; LL-2,6-diaminopimelate from (S)-tetrahydrodipicolinate (succinylase route): step 3/3. In terms of biological role, catalyzes the hydrolysis of N-succinyl-L,L-diaminopimelic acid (SDAP), forming succinate and LL-2,6-diaminopimelate (DAP), an intermediate involved in the bacterial biosynthesis of lysine and meso-diaminopimelic acid, an essential component of bacterial cell walls. This Xanthomonas oryzae pv. oryzae (strain MAFF 311018) protein is Succinyl-diaminopimelate desuccinylase.